The primary structure comprises 348 residues: Fructose-1,6-bisphosphatase class 1 (348 aa).

Glu92, Asp111, Leu113, and Asp114 together coordinate Mg(2+). Residues 114–117 (DGSS) and Asn204 each bind substrate. Glu276 contacts Mg(2+).

Belongs to the FBPase class 1 family. Homotetramer. Mg(2+) serves as cofactor.

Its subcellular location is the cytoplasm. The enzyme catalyses beta-D-fructose 1,6-bisphosphate + H2O = beta-D-fructose 6-phosphate + phosphate. It participates in carbohydrate biosynthesis; gluconeogenesis. The polypeptide is Fructose-1,6-bisphosphatase class 1 (Methylorubrum extorquens (strain PA1) (Methylobacterium extorquens)).